We begin with the raw amino-acid sequence, 923 residues long: DNA mismatch repair protein PMS1 (923 aa).

3 stretches are compositionally biased toward basic and acidic residues: residues 543-553 (DMTPSERDSEL), 565-581 (NVER…RFEE), and 591-601 (GDVERVSEDNP). Residues 543-603 (DMTPSERDSE…ERVSEDNPRC (61 aa)) form a disordered region.

This sequence belongs to the DNA mismatch repair MutL/HexB family. In terms of assembly, heterodimer of MLH1 and PMS1, called MutLalpha, which is the major MMR MutL activity correcting base-base mismatches as well as IDLs. The heterodimer binds double strand DNA independently of a mismatch with positive cooperativity and has more than one DNA binding site. Forms a ternary complex with either the MSH2-MSH6 (MutSalpha) or the MSH2-MSH3 heterodimer (MutSbeta), which recognize and bind to mismatch DNA. Ternary complex formation is promoted by ATP binding. As to expression, expressed at very low levels in mature leaves. Detected in rapidly dividing tissues.

Its subcellular location is the nucleus. Its function is as follows. Required for DNA mismatch repair (MMR), correcting base-base mismatches and insertion-deletion loops (IDLs) resulting from DNA replication, DNA damage or from recombination events between non-identical sequences during meiosis. Component of the MutLalpha heterodimer that forms a ternary complex with the MutS heterodimers, which initially recognize the DNA mismatches. This complex is thought to be responsible for directing the downstream MMR events, including strand discrimination, excision, and resynthesis. Plays a major role in maintaining the genetic stability of simple sequence repeats and in the repair of heteroduplex sites present in meiotic recombination intermediates. Does not seem to be required for homologous somatic recombination. The polypeptide is DNA mismatch repair protein PMS1 (PMS1) (Arabidopsis thaliana (Mouse-ear cress)).